The chain runs to 173 residues: Thiol-disulfide oxidoreductase ResA (173 aa).

Residues 10–29 (VIILLILCGAVGFTLYQGFF) traverse the membrane as a helical; Signal-anchor for type II membrane protein segment. Residues 35–173 (MQIGKEAPNF…LEGYLQKITP (139 aa)) form the Thioredoxin domain. Cysteine 73 and cysteine 76 are joined by a disulfide.

Belongs to the thioredoxin family. ResA subfamily.

The protein localises to the cell membrane. The protein operates within protein modification; cytochrome c assembly. Functionally, thiol-disulfide oxidoreductase which is required in disulfide reduction during c-type cytochrome synthesis. May accept reducing equivalents from CcdA, leading to breakage of disulfide bonds in apocytochrome c; following this reduction heme can be covalently attached. The sequence is that of Thiol-disulfide oxidoreductase ResA from Bacillus cereus (strain ZK / E33L).